We begin with the raw amino-acid sequence, 398 residues long: tRNA-specific 2-thiouridylase MnmA (398 aa).

Residues 20–27 and Leu46 each bind ATP; that span reads AMSGGVDS. The active-site Nucleophile is the Cys114. Cys114 and Cys210 are oxidised to a cystine. Gly138 contacts ATP. The interaction with tRNA stretch occupies residues 160 to 162; the sequence is RDQ. Residue Cys210 is the Cysteine persulfide intermediate of the active site.

Belongs to the MnmA/TRMU family.

The protein resides in the cytoplasm. It carries out the reaction S-sulfanyl-L-cysteinyl-[protein] + uridine(34) in tRNA + AH2 + ATP = 2-thiouridine(34) in tRNA + L-cysteinyl-[protein] + A + AMP + diphosphate + H(+). Functionally, catalyzes the 2-thiolation of uridine at the wobble position (U34) of tRNA, leading to the formation of s(2)U34. The polypeptide is tRNA-specific 2-thiouridylase MnmA (Brucella suis (strain ATCC 23445 / NCTC 10510)).